The sequence spans 226 residues: Probable septum site-determining protein MinC (226 aa).

The protein belongs to the MinC family. In terms of assembly, interacts with MinD and FtsZ.

Cell division inhibitor that blocks the formation of polar Z ring septums. Rapidly oscillates between the poles of the cell to destabilize FtsZ filaments that have formed before they mature into polar Z rings. Prevents FtsZ polymerization. In Bacillus velezensis (strain DSM 23117 / BGSC 10A6 / LMG 26770 / FZB42) (Bacillus amyloliquefaciens subsp. plantarum), this protein is Probable septum site-determining protein MinC.